Reading from the N-terminus, the 573-residue chain is Proline--tRNA ligase (573 aa).

It belongs to the class-II aminoacyl-tRNA synthetase family. ProS type 1 subfamily. As to quaternary structure, homodimer.

It is found in the cytoplasm. The catalysed reaction is tRNA(Pro) + L-proline + ATP = L-prolyl-tRNA(Pro) + AMP + diphosphate. Functionally, catalyzes the attachment of proline to tRNA(Pro) in a two-step reaction: proline is first activated by ATP to form Pro-AMP and then transferred to the acceptor end of tRNA(Pro). As ProRS can inadvertently accommodate and process non-cognate amino acids such as alanine and cysteine, to avoid such errors it has two additional distinct editing activities against alanine. One activity is designated as 'pretransfer' editing and involves the tRNA(Pro)-independent hydrolysis of activated Ala-AMP. The other activity is designated 'posttransfer' editing and involves deacylation of mischarged Ala-tRNA(Pro). The misacylated Cys-tRNA(Pro) is not edited by ProRS. This is Proline--tRNA ligase from Methylobacillus flagellatus (strain ATCC 51484 / DSM 6875 / VKM B-1610 / KT).